Here is a 169-residue protein sequence, read N- to C-terminus: uncharacterized protein (169 aa).

The region spanning 28-157 (ELHLVVHVCI…EFIPYFFLNQ (130 aa)) is the Nudix hydrolase domain. Residues 65–87 (AGSALKGETSRQAAEREVKEELG) carry the Nudix box motif. Mg(2+)-binding residues include Glu-81 and Glu-85.

It belongs to the Nudix hydrolase family. Mg(2+) is required as a cofactor.

This is an uncharacterized protein from Listeria innocua serovar 6a (strain ATCC BAA-680 / CLIP 11262).